Here is a 70-residue protein sequence, read N- to C-terminus: Mu-agatoxin-Ao1b (70 aa).

A signal peptide spans 1–20 (MKAIIFFCFLSVMVFIVAEA). A propeptide spanning residues 21–33 (SSLEALKIFEGER) is cleaved from the precursor. 4 disulfide bridges follow: C35-C50, C42-C55, C49-C65, and C57-C63. N69 bears the Asparagine amide mark.

Belongs to the neurotoxin 07 (Beta/delta-agtx) family. 04 (aga-5) subfamily. Expressed by the venom gland.

It is found in the secreted. In terms of biological role, insecticidal neurotoxin that modulates the insect Nav channel (DmNaV1/tipE (para/tipE)) in a unique manner, with both the activation and inactivation processes being affected. The voltage dependence of activation is shifted toward more hyperpolarized potentials (analogous to site 4 toxins) and a non-inactivating persistent sodium current is induced (site 3-like action). Interestingly, both effects take place in a voltage-dependent manner, producing a bell-shaped curve between -80 and 0 mV. This Agelena orientalis (Funnel-web spider) protein is Mu-agatoxin-Ao1b.